Reading from the N-terminus, the 193-residue chain is Thymidine kinase (193 aa).

An ATP-binding site is contributed by 9-16 (AAMNAGKS).

It belongs to the thymidine kinase family.

The catalysed reaction is thymidine + ATP = dTMP + ADP + H(+). Its function is as follows. This thymidine kinase is one of the enzymes that catalyze DNA precursor synthesis. Although tk is a nonessential gene, some strains of host E.coli do not support the growth of phages that lack this gene. In Escherichia coli (Bacteriophage T4), this protein is Thymidine kinase (TK).